Reading from the N-terminus, the 138-residue chain is Cysteine desulfuration protein SufE (138 aa).

Catalysis depends on cysteine 51, which acts as the Cysteine persulfide intermediate.

Belongs to the SufE family. As to quaternary structure, homodimer. Interacts with SufS.

It is found in the cytoplasm. It functions in the pathway cofactor biosynthesis; iron-sulfur cluster biosynthesis. Functionally, participates in cysteine desulfuration mediated by SufS. Cysteine desulfuration mobilizes sulfur from L-cysteine to yield L-alanine and constitutes an essential step in sulfur metabolism for biosynthesis of a variety of sulfur-containing biomolecules. Functions as a sulfur acceptor for SufS, by mediating the direct transfer of the sulfur atom from the S-sulfanylcysteine of SufS, an intermediate product of cysteine desulfuration process. The chain is Cysteine desulfuration protein SufE from Salmonella agona (strain SL483).